A 106-amino-acid chain; its full sequence is Large ribosomal subunit protein eL30 (106 aa).

The protein belongs to the eukaryotic ribosomal protein eL30 family. As to quaternary structure, component of the large ribosomal subunit. Mature ribosomes consist of a small (40S) and a large (60S) subunit. The 40S subunit contains about 32 different proteins and 1 molecule of RNA (18S). The 60S subunit contains 45 different proteins and 3 molecules of RNA (25S, 5.8S and 5S).

The protein resides in the cytoplasm. Its function is as follows. Component of the ribosome, a large ribonucleoprotein complex responsible for the synthesis of proteins in the cell. The small ribosomal subunit (SSU) binds messenger RNAs (mRNAs) and translates the encoded message by selecting cognate aminoacyl-transfer RNA (tRNA) molecules. The large subunit (LSU) contains the ribosomal catalytic site termed the peptidyl transferase center (PTC), which catalyzes the formation of peptide bonds, thereby polymerizing the amino acids delivered by tRNAs into a polypeptide chain. The nascent polypeptides leave the ribosome through a tunnel in the LSU and interact with protein factors that function in enzymatic processing, targeting, and the membrane insertion of nascent chains at the exit of the ribosomal tunnel. This chain is Large ribosomal subunit protein eL30, found in Candida albicans (strain SC5314 / ATCC MYA-2876) (Yeast).